The primary structure comprises 116 residues: Large ribosomal subunit protein bL20 (116 aa).

The protein belongs to the bacterial ribosomal protein bL20 family.

In terms of biological role, binds directly to 23S ribosomal RNA and is necessary for the in vitro assembly process of the 50S ribosomal subunit. It is not involved in the protein synthesizing functions of that subunit. This chain is Large ribosomal subunit protein bL20 (rplT), found in Mycoplasmopsis fermentans (Mycoplasma fermentans).